The sequence spans 467 residues: Light-independent protochlorophyllide reductase subunit N (467 aa).

Residues C24, C49, and C109 each coordinate [4Fe-4S] cluster.

This sequence belongs to the BchN/ChlN family. Protochlorophyllide reductase is composed of three subunits; ChlL, ChlN and ChlB. Forms a heterotetramer of two ChlB and two ChlN subunits. [4Fe-4S] cluster serves as cofactor.

The enzyme catalyses chlorophyllide a + oxidized 2[4Fe-4S]-[ferredoxin] + 2 ADP + 2 phosphate = protochlorophyllide a + reduced 2[4Fe-4S]-[ferredoxin] + 2 ATP + 2 H2O. It functions in the pathway porphyrin-containing compound metabolism; chlorophyll biosynthesis (light-independent). Component of the dark-operative protochlorophyllide reductase (DPOR) that uses Mg-ATP and reduced ferredoxin to reduce ring D of protochlorophyllide (Pchlide) to form chlorophyllide a (Chlide). This reaction is light-independent. The NB-protein (ChlN-ChlB) is the catalytic component of the complex. The polypeptide is Light-independent protochlorophyllide reductase subunit N (Leptolyngbya boryana (Plectonema boryanum)).